The chain runs to 78 residues: Delta-conotoxin TxVIA (78 aa).

The N-terminal stretch at 1 to 22 is a signal peptide; the sequence is MKLTCMMIVAVLFLTAWTFATA. Residues 23 to 49 constitute a propeptide that is removed on maturation; the sequence is DDSGNGLENLFSNAHHQMKNPEASKLN. 3 disulfides stabilise this stretch: C53/C68, C60/C72, and C67/C77. M59 carries the post-translational modification Methionine sulfoxide; partial.

It belongs to the conotoxin O1 superfamily. In terms of tissue distribution, expressed by the venom duct. Is present in all duct parts with a highest content in part 4 (distal part near the pharynx).

It localises to the secreted. Its function is as follows. Delta-conotoxins bind to site 6 of voltage-gated sodium channels (Nav) and inhibit the inactivation process. Binding of this toxin is strongly calcium-dependent but not voltage-dependent. The binding site is most likely on the extracellular side of the sodium channel. Binds receptor sites on both mollusk and rat central nervous system, but despite its high affinity binding to rat sodium channel, it has no functional effect in vivo and in vitro on it. Also has no effect on Gambusia fish. Is important in mollusk for the paralysis of the prey. Upon injection of the peptide, a subordinate lobster assumes an exaggerated dominant posture (of a 'King-Kong' lobster!). The polypeptide is Delta-conotoxin TxVIA (Conus textile (Cloth-of-gold cone)).